We begin with the raw amino-acid sequence, 184 residues long: Photosystem I assembly protein Ycf4 (184 aa).

2 helical membrane-spanning segments follow: residues 19-39 (LSNF…LLVG) and 57-77 (FIFF…LFIS).

Belongs to the Ycf4 family.

It is found in the plastid. Its subcellular location is the chloroplast thylakoid membrane. Seems to be required for the assembly of the photosystem I complex. This chain is Photosystem I assembly protein Ycf4, found in Jasminum nudiflorum (Winter jasmine).